The primary structure comprises 549 residues: Hydroxylamine reductase (549 aa).

[4Fe-4S] cluster is bound by residues Cys-5, Cys-8, Cys-17, and Cys-23. Residues His-243, Glu-267, Cys-311, Cys-403, Cys-431, Cys-456, Glu-491, and Lys-493 each contribute to the hybrid [4Fe-2O-2S] cluster site. Cys-403 carries the cysteine persulfide modification.

This sequence belongs to the HCP family. The cofactor is [4Fe-4S] cluster. Hybrid [4Fe-2O-2S] cluster serves as cofactor.

It localises to the cytoplasm. It carries out the reaction A + NH4(+) + H2O = hydroxylamine + AH2 + H(+). In terms of biological role, catalyzes the reduction of hydroxylamine to form NH(3) and H(2)O. This Desulfitobacterium hafniense (strain Y51) protein is Hydroxylamine reductase.